Here is a 357-residue protein sequence, read N- to C-terminus: Palmitoyltransferase ZDHHC20-A (357 aa).

Residues Met1 to Leu14 are Cytoplasmic-facing. Residues Ser15 to Val35 traverse the membrane as a helical segment. Residues Glu36 to Ile50 are Lumenal-facing. A helical transmembrane segment spans residues Tyr51–Ser71. Residues Ser72–Lys166 are Cytoplasmic-facing. One can recognise a DHHC domain in the interval Arg123 to Ala173. Catalysis depends on Cys153, which acts as the S-palmitoyl cysteine intermediate. Residues Phe167–Leu187 traverse the membrane as a helical segment. Residues Gln188–Lys204 are Lumenal-facing. The chain crosses the membrane as a helical span at residues Phe205–His228. Over Leu229–Ser357 the chain is Cytoplasmic.

It belongs to the DHHC palmitoyltransferase family.

The protein localises to the golgi apparatus membrane. Its subcellular location is the cell membrane. It localises to the cytoplasm. It is found in the perinuclear region. The protein resides in the endoplasmic reticulum membrane. The protein localises to the endoplasmic reticulum-Golgi intermediate compartment membrane. It catalyses the reaction L-cysteinyl-[protein] + hexadecanoyl-CoA = S-hexadecanoyl-L-cysteinyl-[protein] + CoA. It carries out the reaction L-cysteinyl-[protein] + tetradecanoyl-CoA = S-tetradecanoyl-L-cysteinyl-[protein] + CoA. The catalysed reaction is L-cysteinyl-[protein] + octadecanoyl-CoA = S-octadecanoyl-L-cysteinyl-[protein] + CoA. In terms of biological role, palmitoyltransferase that could catalyze the addition of palmitate onto various protein substrates. Catalyzes palmitoylation of Cys residues on protein substrates and has a preference for acyl-CoA with C16 fatty acid chains but may also utilize acyl-CoA with C14 and C18 fatty acid chains. In Danio rerio (Zebrafish), this protein is Palmitoyltransferase ZDHHC20-A.